Reading from the N-terminus, the 279-residue chain is Shikimate dehydrogenase (NADP(+)) (279 aa).

Residues 14–16 and T63 contribute to the shikimate site; that span reads SIS. K67 functions as the Proton acceptor in the catalytic mechanism. E79 contacts NADP(+). Positions 88 and 103 each coordinate shikimate. NADP(+) is bound by residues 127–131, 151–156, and M219; these read GAGGA and NRTYEK. Residue Y221 participates in shikimate binding. Position 242 (G242) interacts with NADP(+).

It belongs to the shikimate dehydrogenase family. Homodimer.

It catalyses the reaction shikimate + NADP(+) = 3-dehydroshikimate + NADPH + H(+). It participates in metabolic intermediate biosynthesis; chorismate biosynthesis; chorismate from D-erythrose 4-phosphate and phosphoenolpyruvate: step 4/7. Its function is as follows. Involved in the biosynthesis of the chorismate, which leads to the biosynthesis of aromatic amino acids. Catalyzes the reversible NADPH linked reduction of 3-dehydroshikimate (DHSA) to yield shikimate (SA). The polypeptide is Shikimate dehydrogenase (NADP(+)) (Caldicellulosiruptor saccharolyticus (strain ATCC 43494 / DSM 8903 / Tp8T 6331)).